We begin with the raw amino-acid sequence, 340 residues long: MSPASPMSEIRHDWQVDEILELMGRPFNDLLFAAHTVHRAHFDPNAVQVSTLLSIKTGACPEDCGYCPQSAHHEVELERERLLPLEEVLEAARNARSHGASRFCMGAAWRNPTDRNLERVIEMVEGVKQLGLETCMTLGMLTDAQARRLKDAGLDYYNHNLDTSPEFYGQVITTRTYQDRLETLAHVREAGINVCSGGILGMGESRRDRARLLQQLANLPRHPESVPINNLVQVEGTPLAGTEALDPFEFVRTIATARILMPASYVRLSAGRTEMHDELQALCFFAGANSIFYGDKLLTTPNPGENHDRALFERLGIHPLEHSDEGASCETCGGVDIHAA.

The Radical SAM core domain occupies 45 to 272; that stretch reads NAVQVSTLLS…ASYVRLSAGR (228 aa). Positions 60, 64, and 67 each coordinate [4Fe-4S] cluster. [2Fe-2S] cluster-binding residues include Cys-104, Cys-135, Cys-195, and Arg-267.

This sequence belongs to the radical SAM superfamily. Biotin synthase family. In terms of assembly, homodimer. The cofactor is [4Fe-4S] cluster. Requires [2Fe-2S] cluster as cofactor.

It catalyses the reaction (4R,5S)-dethiobiotin + (sulfur carrier)-SH + 2 reduced [2Fe-2S]-[ferredoxin] + 2 S-adenosyl-L-methionine = (sulfur carrier)-H + biotin + 2 5'-deoxyadenosine + 2 L-methionine + 2 oxidized [2Fe-2S]-[ferredoxin]. It functions in the pathway cofactor biosynthesis; biotin biosynthesis; biotin from 7,8-diaminononanoate: step 2/2. In terms of biological role, catalyzes the conversion of dethiobiotin (DTB) to biotin by the insertion of a sulfur atom into dethiobiotin via a radical-based mechanism. The sequence is that of Biotin synthase from Thioalkalivibrio sulfidiphilus (strain HL-EbGR7).